Here is a 215-residue protein sequence, read N- to C-terminus: C' protein (215 aa).

The tract at residues 12-34 (MPSFLKKILKLRGRRQEDESRSR) is disordered. The involved in self-degradation and in host STAT1 degradation stretch occupies residues 15-22 (FLKKILKL).

It belongs to the respirovirus protein C family. The different isoforms interact (via C-terminus) with unphosphorylated and phosphorylated human STAT1 (via N-terminus), favoring the formation of parallel STAT1 homodimers. The different isoforms do not interact with host STAT2. C protein interacts with L protein; this interaction has an inhibitory effect on viral transcription and replication. In terms of processing, Y1 and Y2 proteins are produced not only by alternative initiation, but also by proteolytic cleavage of C'. Only alternative initiation is detected in vitro, whereas in vivo cleavage seems to be predominant.

The protein localises to the host cytoplasm. It localises to the virion. The different isoforms prevent the establishment of cellular antiviral state by blocking the interferon-alpha/beta (IFN-alpha/beta) and IFN-gamma signaling pathways. They inhibit IFN-alpha/beta induced tyrosine phosphorylation of STAT1 and STAT2. Blocking the IFN-alpha/beta pathway requires binding to STAT1 in the cytoplasm. They inhibit IFN-gamma induced serine phosphorylation of STAT1. Block the IFN-gamma pathway by binding to and stabilizing the parallel form of the STAT1 dimer, further inducing high-molecular-weight complex (HMWC) formation and inhibition of transcription by IFN-gamma. May also have a role in preventing the cell to enter apoptosis. Modulate regulation of viral transcription and replication. Overexpression inhibits the viral RNA polymerase. The absence of all C', C, Y1 and Y2 proteins leads to viral delayed growth. Plays an important role in virion particles release. Modulates virion shape. The protein is C' protein (P/V/C) of Sendai virus (strain Z) (SeV).